Consider the following 413-residue polypeptide: Serine--tRNA ligase (413 aa).

221-223 (TAE) is a binding site for L-serine. Residue 252–254 (RRE) coordinates ATP. Glu-275 contacts L-serine. Position 339–342 (339–342 (EVSS)) interacts with ATP. An L-serine-binding site is contributed by Ser-375.

It belongs to the class-II aminoacyl-tRNA synthetase family. Type-1 seryl-tRNA synthetase subfamily. In terms of assembly, homodimer. The tRNA molecule binds across the dimer.

The protein resides in the cytoplasm. The catalysed reaction is tRNA(Ser) + L-serine + ATP = L-seryl-tRNA(Ser) + AMP + diphosphate + H(+). It carries out the reaction tRNA(Sec) + L-serine + ATP = L-seryl-tRNA(Sec) + AMP + diphosphate + H(+). It participates in aminoacyl-tRNA biosynthesis; selenocysteinyl-tRNA(Sec) biosynthesis; L-seryl-tRNA(Sec) from L-serine and tRNA(Sec): step 1/1. Functionally, catalyzes the attachment of serine to tRNA(Ser). Is also able to aminoacylate tRNA(Sec) with serine, to form the misacylated tRNA L-seryl-tRNA(Sec), which will be further converted into selenocysteinyl-tRNA(Sec). This Dehalococcoides mccartyi (strain ATCC BAA-2266 / KCTC 15142 / 195) (Dehalococcoides ethenogenes (strain 195)) protein is Serine--tRNA ligase.